The following is a 116-amino-acid chain: Protein SPIRAL1-like 1 (116 aa).

Positions 1 to 12 are enriched in gly residues; it reads MSRGGSAGGGQS. The interval 1–116 is disordered; the sequence is MSRGGSAGGG…SSLGYLFGGN (116 aa). A compositionally biased stretch (pro residues) spans 27 to 43; that stretch reads AAKPAPAAAPAPAPAPA. Positions 44 to 60 are enriched in low complexity; the sequence is PAAAVAAPAEKPSPAKA. The span at 72-90 shows a compositional bias: polar residues; that stretch reads GSRSNNNYHRADGQNTGNF. Gly residues predominate over residues 103 to 116; it reads PGGGSSLGYLFGGN.

Belongs to the SPIRAL1 family.

In terms of biological role, acts in maintaining the cortical microtubules organization essential for anisotropic cell growth. The protein is Protein SPIRAL1-like 1 of Oryza sativa subsp. japonica (Rice).